We begin with the raw amino-acid sequence, 412 residues long: BSD domain-containing protein 1 (412 aa).

The BSD domain maps to 145–197 (WLSTFSLEERKAEISELLVSSPAIRALYTKMVPAAVAHAEFWQRYFYKVFQLE). The segment covering 208 to 217 (QRAEQTDHSE) has biased composition (basic and acidic residues). 3 disordered regions span residues 208-227 (QRAEQTDHSESLGWEEEDEE), 253-272 (VTVADTPESSSPPQAVASLS), and 298-412 (ESVT…ENWE). 2 stretches are compositionally biased toward polar residues: residues 259 to 272 (PESSSPPQAVASLS) and 298 to 308 (ESVTIRVTQPS). Phosphoserine is present on serine 308. Basic and acidic residues predominate over residues 328 to 349 (PEERPAPREETAREDMAQDLRV). The segment covering 353-372 (NSDSGKSTPSNNGKKGSSTD) has biased composition (polar residues). 2 stretches are compositionally biased toward acidic residues: residues 373 to 390 (VSEDWEKDFDLDMTEEEV) and 400 to 412 (TEELEDEDWENWE).

The polypeptide is BSD domain-containing protein 1 (bsdc1) (Danio rerio (Zebrafish)).